An 89-amino-acid chain; its full sequence is Small ribosomal subunit protein uS15 (89 aa).

It belongs to the universal ribosomal protein uS15 family. Part of the 30S ribosomal subunit. Forms a bridge to the 50S subunit in the 70S ribosome, contacting the 23S rRNA.

Functionally, one of the primary rRNA binding proteins, it binds directly to 16S rRNA where it helps nucleate assembly of the platform of the 30S subunit by binding and bridging several RNA helices of the 16S rRNA. In terms of biological role, forms an intersubunit bridge (bridge B4) with the 23S rRNA of the 50S subunit in the ribosome. The sequence is that of Small ribosomal subunit protein uS15 from Azobacteroides pseudotrichonymphae genomovar. CFP2.